Reading from the N-terminus, the 62-residue chain is Large ribosomal subunit protein bL28 (62 aa).

The interval 1–28 (MARVCAITGRKARSGNSRSHAMNATKRK) is disordered.

Belongs to the bacterial ribosomal protein bL28 family.

The chain is Large ribosomal subunit protein bL28 from Bacillus thuringiensis (strain Al Hakam).